The sequence spans 582 residues: Inactive metallocarboxypeptidase ECM14 (582 aa).

An N-terminal signal peptide occupies residues 1–20; sequence MHILQVITGATLVSVPFVSA. The propeptide occupies 21-172; the sequence is IPSSTSEFLP…QAVYESYPQP (152 aa). The 323-residue stretch at 200-522 folds into the Peptidase M14 domain; it reads DYQPLSVIIP…NAVLVFGQFL (323 aa). Residues histidine 265 and glutamate 268 each coordinate Zn(2+). Substrate contacts are provided by residues 265 to 268, arginine 323, and 340 to 341; these read HARE and DR. Cysteine 334 and cysteine 357 form a disulfide bridge. Asparagine 381 and asparagine 387 each carry an N-linked (GlcNAc...) asparagine glycan. Histidine 397 is a Zn(2+) binding site. 398–399 is a binding site for substrate; that stretch reads SY. Residues 561–571 are compositionally biased toward acidic residues; sequence SNQLEDDDNEN. The segment at 561–582 is disordered; sequence SNQLEDDDNENDTLLGFRTQKV. Asparagine 571 carries N-linked (GlcNAc...) asparagine glycosylation.

This sequence belongs to the peptidase M14 family. It depends on Zn(2+) as a cofactor.

It localises to the vacuole. The protein resides in the secreted. In terms of biological role, inactive carboxypeptidase that may play a role in cell wall organization and biogenesis. The protein is Inactive metallocarboxypeptidase ECM14 (ECM14) of Coccidioides posadasii (strain C735) (Valley fever fungus).